The following is a 389-amino-acid chain: Chalcone synthase 1A (389 aa).

C164 is an active-site residue.

Belongs to the thiolase-like superfamily. Chalcone/stilbene synthases family.

The catalysed reaction is (E)-4-coumaroyl-CoA + 3 malonyl-CoA + 3 H(+) = 2',4,4',6'-tetrahydroxychalcone + 3 CO2 + 4 CoA. It functions in the pathway secondary metabolite biosynthesis; flavonoid biosynthesis. In terms of biological role, the primary product of this enzyme is 4,2',4',6'-tetrahydroxychalcone (also termed naringenin-chalcone or chalcone) which can under specific conditions spontaneously isomerize into naringenin. This Pisum sativum (Garden pea) protein is Chalcone synthase 1A (CHS-1A).